Consider the following 229-residue polypeptide: Potassium/proton antiporter CemA (229 aa).

4 helical membrane-spanning segments follow: residues 7–27 (LIPL…SLSF), 114–134 (IICF…LVIL), 154–174 (ILLL…ELMI), and 189–209 (IISG…KYWI).

Belongs to the CemA family.

It localises to the plastid. The protein localises to the chloroplast inner membrane. The catalysed reaction is K(+)(in) + H(+)(out) = K(+)(out) + H(+)(in). Functionally, contributes to K(+)/H(+) antiport activity by supporting proton efflux to control proton extrusion and homeostasis in chloroplasts in a light-dependent manner to modulate photosynthesis. Prevents excessive induction of non-photochemical quenching (NPQ) under continuous-light conditions. Indirectly promotes efficient inorganic carbon uptake into chloroplasts. In Fagus sylvatica (Beechnut), this protein is Potassium/proton antiporter CemA.